The following is a 547-amino-acid chain: Inactive delta-guaiene synthase (547 aa).

Mg(2+)-binding residues include Asp299, Asp303, and Asp444. The DDXXD motif motif lies at 299 to 303 (DDTYD).

The protein belongs to the terpene synthase family. It depends on Mg(2+) as a cofactor.

The sequence is that of Inactive delta-guaiene synthase (C1) from Aquilaria crassna (Eagle wood).